The sequence spans 518 residues: MVSSFSSKRLGDTMDSLALGSNWAGGVAIVLFLAPLALHLVSSYLFPSTSTVINSGRAWDIFRTTAKKRFRSDAARLLQNGFEKSPDAFRILTDNGPLLVLSPRYAREVRSDDRLSLDHFIASEFHPDIPGFEPFKLILDPRNPLNTILKTSLTQALEDLSVEVADALSTALTDDSEWHEISPCQTALKLVAQMASKAFIGPEKCRDPKWHNVIITYTHNVYRAAQALHFWPKFLRPIVARFLPACQTLQAQIAEAREILEPLVAQRRADRACRAAQGKPVPSRADVIDWLEDSHGDQPYDPVAAQLLLSFAAIHGTSNLLAQALMDLCTAPDLIRDIRAEITSVLGDAGLTRAALYRLKLMDSALKESQRLAPNRLLSMGRIAQSDMHLSDGLRIPRGTTLMVSAHAMWEPQIYPDPRRYDGYRFYKLRQVPGQEGQHQLVSATEKHMGFGYGKHACPGRFFAAAEIKVALCHILLKYDLEHRGGGPPPRVWSQGIHLFPDPTARIRVRRRKEEISL.

The chain crosses the membrane as a helical span at residues 26 to 46 (GVAIVLFLAPLALHLVSSYLF). Cysteine 458 is a heme binding site.

This sequence belongs to the cytochrome P450 family. It depends on heme as a cofactor.

It is found in the membrane. It participates in secondary metabolite biosynthesis; terpenoid biosynthesis. Functionally, cytochrome P450 monooxygenase; part of the gene cluster that mediates the biosynthesis of pyripyropene A, a specific human acyl-coenzyme A:cholesterol acyltransferase 2 inhibitor. The first step of the pathway is the synthesis of nicotinyl-CoA from nicotinic acid by the nicotinic acid-CoA ligase pyr1. Nicotinyl-CoA is then a substrate of polyketide synthase pyr2 to produce 4-hydroxy-6-(3-pyridinyl)-2H-pyran-2-one (HPPO) which is further prenylated by the polyprenyl transferase pyr6 to yield farnesyl-HPPO. The next steps consist of an epoxidation of farnesyl-HPPO to epoxyfarnesyl-HPPO by FAD-dependent monooxygenase pyr5 and a cyclization of the terpenoid portion by the terpene cyclase pyr4 to yield deacetyl-pyripyropene E. The 2 cytochrome P450 monooxygenases pyr3 and pyr9, and the 2 acetyltransferases pyr7 and pyr8 are involved in the conversion of deacetyl-pyripyropene E into pyripyropene A through several cycles of oxidation and acetylation steps. Pyr7 acetylates deacetyl-pyripyropene E to pyripyropene E which is oxidized to 11-deacetyl-pyripyropene O by pyr3, which is in turn acetylated into pyripyropene O by pyr8. Pyripyropene O is then oxidized to deacetyl-pyripyropene A by pyr9. Deacetyl-pyripyropene A is finally acetylated to pyripyropene A by pyr8. The polypeptide is Cytochrome P450 monooxygenase pyr3 (Aspergillus fumigatus (strain ATCC MYA-4609 / CBS 101355 / FGSC A1100 / Af293) (Neosartorya fumigata)).